A 553-amino-acid chain; its full sequence is CTP synthase (553 aa).

Positions 1 to 270 (MTKYVFVTGG…DELICEELKL (270 aa)) are amidoligase domain. Ser-13 lines the CTP pocket. Residue Ser-13 participates in UTP binding. ATP-binding positions include 14–19 (SLGKGI) and Asp-71. Residues Asp-71 and Glu-144 each contribute to the Mg(2+) site. Residues 151–153 (DIE), 191–196 (KTKPTQ), and Lys-227 each bind CTP. UTP-binding positions include 191 to 196 (KTKPTQ) and Lys-227. In terms of domain architecture, Glutamine amidotransferase type-1 spans 295–547 (TIGMVGKYVE…VEAARAHHEA (253 aa)). Gly-356 contacts L-glutamine. Residue Cys-383 is the Nucleophile; for glutamine hydrolysis of the active site. Residues 384-387 (LGMQ), Glu-407, and Arg-473 contribute to the L-glutamine site. Active-site residues include His-520 and Glu-522.

It belongs to the CTP synthase family. In terms of assembly, homotetramer.

The enzyme catalyses UTP + L-glutamine + ATP + H2O = CTP + L-glutamate + ADP + phosphate + 2 H(+). It catalyses the reaction L-glutamine + H2O = L-glutamate + NH4(+). The catalysed reaction is UTP + NH4(+) + ATP = CTP + ADP + phosphate + 2 H(+). It participates in pyrimidine metabolism; CTP biosynthesis via de novo pathway; CTP from UDP: step 2/2. Allosterically activated by GTP, when glutamine is the substrate; GTP has no effect on the reaction when ammonia is the substrate. The allosteric effector GTP functions by stabilizing the protein conformation that binds the tetrahedral intermediate(s) formed during glutamine hydrolysis. Inhibited by the product CTP, via allosteric rather than competitive inhibition. In terms of biological role, catalyzes the ATP-dependent amination of UTP to CTP with either L-glutamine or ammonia as the source of nitrogen. Regulates intracellular CTP levels through interactions with the four ribonucleotide triphosphates. The polypeptide is CTP synthase (Paraburkholderia phymatum (strain DSM 17167 / CIP 108236 / LMG 21445 / STM815) (Burkholderia phymatum)).